The primary structure comprises 156 residues: Small ribosomal subunit protein uS7 (156 aa).

It belongs to the universal ribosomal protein uS7 family. As to quaternary structure, part of the 30S ribosomal subunit. Contacts proteins S9 and S11.

One of the primary rRNA binding proteins, it binds directly to 16S rRNA where it nucleates assembly of the head domain of the 30S subunit. Is located at the subunit interface close to the decoding center, probably blocks exit of the E-site tRNA. The chain is Small ribosomal subunit protein uS7 from Campylobacter jejuni subsp. jejuni serotype O:6 (strain 81116 / NCTC 11828).